The following is a 249-amino-acid chain: Type III pantothenate kinase (249 aa).

6 to 13 contacts ATP; the sequence is DIGNSRTK. Residues Y89 and 96-99 each bind substrate; that span reads GIDR. D98 (proton acceptor) is an active-site residue. D119 provides a ligand contact to K(+). Residue T122 coordinates ATP. T174 contributes to the substrate binding site.

Belongs to the type III pantothenate kinase family. Homodimer. NH4(+) is required as a cofactor. K(+) serves as cofactor.

Its subcellular location is the cytoplasm. It catalyses the reaction (R)-pantothenate + ATP = (R)-4'-phosphopantothenate + ADP + H(+). It functions in the pathway cofactor biosynthesis; coenzyme A biosynthesis; CoA from (R)-pantothenate: step 1/5. Functionally, catalyzes the phosphorylation of pantothenate (Pan), the first step in CoA biosynthesis. This chain is Type III pantothenate kinase, found in Colwellia psychrerythraea (strain 34H / ATCC BAA-681) (Vibrio psychroerythus).